The sequence spans 419 residues: MSGAARAGPARLAALALLTCSLWPTRADNASQEYYTALINVTVQEPGRGTPLTFRIDRGRYGLDSPKAEVRGQVLAPLPIHGVADHLGCDPQTRFFVPPNIKQWIALLQRGNCTFKEKISRAAFHNAVAVVIYNNKSKEEPVTMTHPGTGDIIAVMITELRGKDILSYLEKNISVQMTIAVGTRMPPKNFSRGSLVFVSISFIVLMIISSAWLIFYFIQKIRYTNARDRNQRRLGDAAKKAISKLTTRTVKKGDKETDPDFDHCAVCIESYKQNDVVRVLPCKHVFHKSCVDPWLSEHCTCPMCKLNILKALGIVPNLPCTDNVAFDMERLTRTQAVNRRSALGDLANDSSLGLEPLRTSGISPLPQDGELTPRTGEINIAVTKEWFIIASFGLLSALTLCYMIIRATASLNANEVEWF.

A signal peptide spans 1–27; that stretch reads MSGAARAGPARLAALALLTCSLWPTRA. Residues 28-194 are Extracellular-facing; the sequence is DNASQEYYTA…MPPKNFSRGS (167 aa). Asparagine 29, asparagine 40, asparagine 112, asparagine 135, asparagine 172, and asparagine 189 each carry an N-linked (GlcNAc...) asparagine glycan. Residues 105–176 enclose the PA domain; sequence IALLQRGNCT…SYLEKNISVQ (72 aa). A helical transmembrane segment spans residues 195 to 217; that stretch reads LVFVSISFIVLMIISSAWLIFYF. Residues 218 to 419 are Cytoplasmic-facing; it reads IQKIRYTNAR…SLNANEVEWF (202 aa). The RING-type zinc-finger motif lies at 264–305; that stretch reads CAVCIESYKQNDVVRVLPCKHVFHKSCVDPWLSEHCTCPMCK. Serine 341 is subject to Phosphoserine.

As to expression, in testis sections, expressed in interstitial tissue and seminiferous tubules. In tubules, expression is mainly in postmeiotic germ cells and to a much lesser extent in Sertoli cells (at protein level). Expressed at high levels in liver, lung, stomach, heart and thymus.

Its subcellular location is the membrane. It localises to the cytoplasm. It carries out the reaction S-ubiquitinyl-[E2 ubiquitin-conjugating enzyme]-L-cysteine + [acceptor protein]-L-lysine = [E2 ubiquitin-conjugating enzyme]-L-cysteine + N(6)-ubiquitinyl-[acceptor protein]-L-lysine.. It functions in the pathway protein modification; protein ubiquitination. Functionally, acts as an E3 ubiquitin-protein ligase. May have a role during the programmed cell death of hematopoietic cells. The protein is E3 ubiquitin-protein ligase RNF130 of Rattus norvegicus (Rat).